Here is a 49-residue protein sequence, read N- to C-terminus: MLRKAGLACTVCGSRNYTLNLSSVAKEKRVEVKKFCRTCGKHTLHKETR.

This sequence belongs to the bacterial ribosomal protein bL33 family.

This Lactococcus lactis subsp. cremoris (strain MG1363) protein is Large ribosomal subunit protein bL33C.